The sequence spans 107 residues: Inner membrane protein YgbE (107 aa).

Over 1–20 (MRNSHNITLTNNDSLTEDEE) the chain is Cytoplasmic. A helical transmembrane segment spans residues 21-43 (TTWSLPGAVVGFISWLFALAMPM). Topologically, residues 44-52 (LIYGSNTLF) are periplasmic. A helical membrane pass occupies residues 53–75 (FFIYTWPFFLALMPVAVVVGIAL). Over 76–86 (HSLMDGKLRYS) the chain is Cytoplasmic. Residues 87–106 (IVFTLVTVGIMFGALFMWLL) traverse the membrane as a helical segment. Residue glycine 107 is a topological domain, periplasmic.

The protein resides in the cell inner membrane. This is Inner membrane protein YgbE (ygbE) from Escherichia coli (strain K12).